The chain runs to 760 residues: Translocation protein SEC63 homolog (760 aa).

Residues 1–14 lie on the Lumenal side of the membrane; the sequence is MAGQQFQYDDSGNT. A helical transmembrane segment spans residues 15–35; sequence FFYFLTSFVGLIVIPATYYLW. The Cytoplasmic segment spans residues 36–69; it reads PRDQNAEQIRLKNIRKVYGRCMWYRLRLLKPQPN. A helical membrane pass occupies residues 70 to 90; sequence IIPTVKKIVLLAGWALFLFLA. The Lumenal portion of the chain corresponds to 91 to 188; it reads YKVSKTDREY…LPAWIVDQKN (98 aa). Residues 104–165 enclose the J domain; that stretch reads NPYEVLNLDP…ESRKNWEEFG (62 aa). The helical transmembrane segment at 189 to 209 threads the bilayer; it reads SILVLLVYGLAFMVILPVVVG. In terms of domain architecture, SEC63 1 spans 197-541; the sequence is GLAFMVILPV…LKKKPTPVLL (345 aa). At 210–760 the chain is on the cytoplasmic side; sequence SWWYRSIRYS…EEEEEEEDDD (551 aa). Positions 492–617 are disordered; that stretch reads AEEQPAEDGQ…DDEAEWQELQ (126 aa). Basic residues predominate over residues 518–536; it reads KGPKKTAKSKKKKPLKKKP. Threonine 537 carries the phosphothreonine modification. The span at 582 to 608 shows a compositional bias: basic and acidic residues; the sequence is NRDSQSEKDDGSDRDSDREQDEKQNKD. A coiled-coil region spans residues 597 to 635; that stretch reads SDREQDEKQNKDDEAEWQELQQSIQRKERALLETKSKIT. One can recognise an SEC63 2 domain in the interval 637–714; that stretch reads PVYSLYFPEE…GLDQIKPLKL (78 aa). Positions 720-760 are disordered; the sequence is KPVPENHPQWDTAIEGDEDQEDSEGFEDSFEEEEEEEEDDD. Residues 733-760 show a composition bias toward acidic residues; it reads IEGDEDQEDSEGFEDSFEEEEEEEEDDD. Serine 742 and serine 748 each carry phosphoserine.

In terms of assembly, the ER translocon complex consists of channel-forming core components SEC61A1, SEC61B and SEC61G and different auxiliary components such as SEC62 and SEC63. In terms of tissue distribution, widely expressed, with high levels in the liver.

The protein resides in the endoplasmic reticulum membrane. In terms of biological role, mediates cotranslational and post-translational transport of certain precursor polypeptides across endoplasmic reticulum (ER). Proposed to play an auxiliary role in recognition of precursors with short and apolar signal peptides. May cooperate with SEC62 and HSPA5/BiP to facilitate targeting of small presecretory proteins into the SEC61 channel-forming translocon complex, triggering channel opening for polypeptide translocation to the ER lumen. Required for efficient PKD1/Polycystin-1 biogenesis and trafficking to the plasma membrane of the primary cilia. In Homo sapiens (Human), this protein is Translocation protein SEC63 homolog.